Consider the following 360-residue polypeptide: Phenylalanine--tRNA ligase alpha subunit (360 aa).

Glutamate 260 lines the Mg(2+) pocket.

This sequence belongs to the class-II aminoacyl-tRNA synthetase family. Phe-tRNA synthetase alpha subunit type 1 subfamily. Tetramer of two alpha and two beta subunits. The cofactor is Mg(2+).

Its subcellular location is the cytoplasm. It catalyses the reaction tRNA(Phe) + L-phenylalanine + ATP = L-phenylalanyl-tRNA(Phe) + AMP + diphosphate + H(+). The sequence is that of Phenylalanine--tRNA ligase alpha subunit from Methylobacterium nodulans (strain LMG 21967 / CNCM I-2342 / ORS 2060).